The following is a 548-amino-acid chain: Adenine deaminase (548 aa).

This sequence belongs to the metallo-dependent hydrolases superfamily. Adenine deaminase family. Mn(2+) is required as a cofactor.

The enzyme catalyses adenine + H2O + H(+) = hypoxanthine + NH4(+). The polypeptide is Adenine deaminase (Borreliella afzelii (strain PKo) (Borrelia afzelii)).